We begin with the raw amino-acid sequence, 348 residues long: [FeFe] hydrogenase maturase subunit HydE (348 aa).

Residues 49–268 (DEVHIRAIIE…LLPDSNIPAT (220 aa)) form the Radical SAM core domain. Residues Cys-63, Cys-67, and Cys-70 each contribute to the [4Fe-4S] cluster site. [2Fe-2S] cluster is bound by residues Cys-311, Cys-319, and Cys-322.

The protein belongs to the radical SAM superfamily. HydE family. As to quaternary structure, monomer. [4Fe-4S] cluster serves as cofactor. Requires [2Fe-2S] cluster as cofactor.

Functionally, required for the maturation of the [FeFe]-hydrogenase HydA. Catalyzes the reductive cleavage of S-adenosyl-L-methionine (in vitro), suggesting it may contribute to the biosynthesis of an essential sulfur-containing ligand that binds to the hydrogenase active site [2Fe-2S] cluster. This is [FeFe] hydrogenase maturase subunit HydE from Thermotoga maritima (strain ATCC 43589 / DSM 3109 / JCM 10099 / NBRC 100826 / MSB8).